Here is a 203-residue protein sequence, read N- to C-terminus: FMN-dependent NADH:quinone oxidoreductase (203 aa).

Residues S9, 15–17 (SVS), and 138–141 (SRGG) each bind FMN.

The protein belongs to the azoreductase type 1 family. As to quaternary structure, homodimer. FMN is required as a cofactor.

It catalyses the reaction 2 a quinone + NADH + H(+) = 2 a 1,4-benzosemiquinone + NAD(+). It carries out the reaction N,N-dimethyl-1,4-phenylenediamine + anthranilate + 2 NAD(+) = 2-(4-dimethylaminophenyl)diazenylbenzoate + 2 NADH + 2 H(+). Quinone reductase that provides resistance to thiol-specific stress caused by electrophilic quinones. In terms of biological role, also exhibits azoreductase activity. Catalyzes the reductive cleavage of the azo bond in aromatic azo compounds to the corresponding amines. In Methylorubrum extorquens (strain PA1) (Methylobacterium extorquens), this protein is FMN-dependent NADH:quinone oxidoreductase.